A 129-amino-acid chain; its full sequence is Transmembrane protein 105 (129 aa).

2 consecutive transmembrane segments (helical) span residues Ala23–Leu43 and Phe94–Val114.

It is found in the membrane. The polypeptide is Transmembrane protein 105 (TMEM105) (Homo sapiens (Human)).